The chain runs to 85 residues: MRTLTLCWLALLALAVTGVLLGGAGDSPWLLAAVLACAVAKGWLIGERFMELAHAPALWRRLLLAWPLLMALAVGAALYLARMNN.

The next 3 helical transmembrane spans lie at 4–24 (LTLCWLALLALAVTGVLLGGA), 27–47 (SPWLLAAVLACAVAKGWLIGE), and 61–81 (RLLLAWPLLMALAVGAALYLA).

The protein localises to the cell membrane. This is an uncharacterized protein from Pseudomonas aeruginosa (strain ATCC 15692 / DSM 22644 / CIP 104116 / JCM 14847 / LMG 12228 / 1C / PRS 101 / PAO1).